The primary structure comprises 335 residues: S-adenosylmethionine:tRNA ribosyltransferase-isomerase (335 aa).

The protein belongs to the QueA family. Monomer.

It is found in the cytoplasm. It catalyses the reaction 7-aminomethyl-7-carbaguanosine(34) in tRNA + S-adenosyl-L-methionine = epoxyqueuosine(34) in tRNA + adenine + L-methionine + 2 H(+). Its pathway is tRNA modification; tRNA-queuosine biosynthesis. Functionally, transfers and isomerizes the ribose moiety from AdoMet to the 7-aminomethyl group of 7-deazaguanine (preQ1-tRNA) to give epoxyqueuosine (oQ-tRNA). The protein is S-adenosylmethionine:tRNA ribosyltransferase-isomerase of Thermotoga petrophila (strain ATCC BAA-488 / DSM 13995 / JCM 10881 / RKU-1).